A 183-amino-acid chain; its full sequence is Apo-citrate lyase phosphoribosyl-dephospho-CoA transferase (183 aa).

Belongs to the CitX family.

The enzyme catalyses apo-[citrate lyase ACP] + 2'-(5''-triphospho-alpha-D-ribosyl)-3'-dephospho-CoA = holo-[citrate lyase ACP] + diphosphate. Its function is as follows. Transfers 2-(5''-triphosphoribosyl)-3'-dephosphocoenzyme-A on a serine residue to the apo-acyl carrier protein (gamma chain) of the citrate lyase to yield holo-acyl carrier protein. The sequence is that of Apo-citrate lyase phosphoribosyl-dephospho-CoA transferase from Escherichia coli O9:H4 (strain HS).